We begin with the raw amino-acid sequence, 230 residues long: 3-beta-hydroxysteroid-Delta(8),Delta(7)-isomerase (230 aa).

Threonine 2 carries the N-acetylthreonine modification. The next 4 helical transmembrane spans lie at serine 29 to leucine 49, leucine 66 to tyrosine 86, methionine 121 to leucine 141, and phenylalanine 185 to leucine 205. Positions glycine 61–valine 204 constitute an EXPERA domain.

The protein belongs to the EBP family.

It is found in the endoplasmic reticulum membrane. It localises to the nucleus envelope. The protein localises to the cytoplasmic vesicle. The catalysed reaction is lathosterol = 5alpha-cholest-8-en-3beta-ol. It catalyses the reaction zymosterol = 5alpha-cholesta-7,24-dien-3beta-ol. The enzyme catalyses 5,6alpha-epoxy-5alpha-cholestan-3beta-ol + H2O = 5alpha-cholestane-3beta,5,6beta-triol. It carries out the reaction 5,6beta-epoxy-5beta-cholestan-3beta-ol + H2O = 5alpha-cholestane-3beta,5,6beta-triol. The protein operates within steroid biosynthesis; cholesterol biosynthesis. In terms of biological role, isomerase that catalyzes the conversion of Delta(8)-sterols to their corresponding Delta(7)-isomers. Functionally, component of the microsomal antiestrogen binding site (AEBS), a multiproteic complex at the ER membrane that consists of an association between EBP and 7-dehydrocholesterol reductase/DHCR7. This complex is responsible for cholesterol-5,6-epoxide hydrolase (ChEH) activity, which consists in the hydration of cholesterol-5,6-epoxides (5,6-EC) into cholestane-3beta,5alpha,6beta-triol (CT). The precise role of each component of this complex has not been described yet. The sequence is that of 3-beta-hydroxysteroid-Delta(8),Delta(7)-isomerase from Mus musculus (Mouse).